We begin with the raw amino-acid sequence, 226 residues long: Orotidine 5'-phosphate decarboxylase (226 aa).

Substrate contacts are provided by residues aspartate 9, lysine 31, aspartate 58–threonine 67, threonine 115, arginine 176, glutamine 184, glycine 204, and arginine 205. The active-site Proton donor is lysine 60.

Belongs to the OMP decarboxylase family. Type 1 subfamily. In terms of assembly, homodimer.

It carries out the reaction orotidine 5'-phosphate + H(+) = UMP + CO2. It functions in the pathway pyrimidine metabolism; UMP biosynthesis via de novo pathway; UMP from orotate: step 2/2. Functionally, catalyzes the decarboxylation of orotidine 5'-monophosphate (OMP) to uridine 5'-monophosphate (UMP). This chain is Orotidine 5'-phosphate decarboxylase, found in Wolbachia pipientis subsp. Culex pipiens (strain wPip).